The following is a 158-amino-acid chain: MAESINSLEELGTVAKTEAAAPVDVQKLDAQGRAYATGKRKDAVARVWVKPGTGKITVNDKEFEKYFARPVLQMILQQPIVASNRAGQFDIVATVAGGGLSGQAGAVRHGISKALTYYEPGLRTVLKKGGFLTRDSRVVERKKYGKAKARRSFQFSKR.

The protein belongs to the universal ribosomal protein uS9 family.

The chain is Small ribosomal subunit protein uS9 from Brucella melitensis biotype 1 (strain ATCC 23456 / CCUG 17765 / NCTC 10094 / 16M).